The chain runs to 109 residues: Spermidine export protein MdtI (109 aa).

The next 4 helical transmembrane spans lie at 6-26 (FYHI…NILL), 35-55 (VWLG…LAQA), 64-84 (AYAL…WILF), and 88-108 (LNYK…MIKL).

This sequence belongs to the drug/metabolite transporter (DMT) superfamily. Small multidrug resistance (SMR) (TC 2.A.7.1) family. MdtI subfamily. In terms of assembly, forms a complex with MdtJ.

It is found in the cell inner membrane. Functionally, catalyzes the excretion of spermidine. The chain is Spermidine export protein MdtI from Yersinia enterocolitica serotype O:8 / biotype 1B (strain NCTC 13174 / 8081).